A 307-amino-acid chain; its full sequence is Low-salt glycan biosynthesis hexosyltransferase Agl10 (307 aa).

Belongs to the glycosyltransferase 2 family.

Its pathway is protein modification; protein glycosylation. It participates in cell surface structure biogenesis; S-layer biogenesis. Functionally, hexosyltransferase involved in N-glycan biosynthetic pathway that takes place under low-salt conditions (1.75 M instead of 3.4 M). Participates in the formation of the tetrasaccharide present at 'Asn-532' of S-layer glycoprotein Csg, consisting of a sulfated hexose, 2 hexoses and rhamnose. Involved in the addition of final rhamnose (sugar 4) of the tetrasaccharide on the dolichol phosphate carrier. This is Low-salt glycan biosynthesis hexosyltransferase Agl10 (agl10) from Haloferax volcanii (strain ATCC 29605 / DSM 3757 / JCM 8879 / NBRC 14742 / NCIMB 2012 / VKM B-1768 / DS2) (Halobacterium volcanii).